Here is a 225-residue protein sequence, read N- to C-terminus: Biosynthetic peptidoglycan transglycosylase (225 aa).

Residues 8–28 (VLLIFIGAILLIQLWIFSSLV) traverse the membrane as a helical segment.

The protein belongs to the glycosyltransferase 51 family.

It localises to the cell inner membrane. It carries out the reaction [GlcNAc-(1-&gt;4)-Mur2Ac(oyl-L-Ala-gamma-D-Glu-L-Lys-D-Ala-D-Ala)](n)-di-trans,octa-cis-undecaprenyl diphosphate + beta-D-GlcNAc-(1-&gt;4)-Mur2Ac(oyl-L-Ala-gamma-D-Glu-L-Lys-D-Ala-D-Ala)-di-trans,octa-cis-undecaprenyl diphosphate = [GlcNAc-(1-&gt;4)-Mur2Ac(oyl-L-Ala-gamma-D-Glu-L-Lys-D-Ala-D-Ala)](n+1)-di-trans,octa-cis-undecaprenyl diphosphate + di-trans,octa-cis-undecaprenyl diphosphate + H(+). The protein operates within cell wall biogenesis; peptidoglycan biosynthesis. Functionally, peptidoglycan polymerase that catalyzes glycan chain elongation from lipid-linked precursors. The protein is Biosynthetic peptidoglycan transglycosylase of Acinetobacter baumannii (strain ACICU).